A 124-amino-acid chain; its full sequence is Ribonuclease pancreatic (124 aa).

Residues Lys7 and Arg10 each contribute to the substrate site. His12 functions as the Proton acceptor in the catalytic mechanism. 4 disulfide bridges follow: Cys26–Cys84, Cys40–Cys95, Cys58–Cys110, and Cys65–Cys72. An N-linked (GlcNAc...) asparagine glycan is attached at Asn34. Substrate contacts are provided by residues 41–45, Lys66, and Arg85; that span reads KPVNT. The active-site Proton donor is His119.

Belongs to the pancreatic ribonuclease family. Monomer. Interacts with and forms tight 1:1 complexes with RNH1. Dimerization of two such complexes may occur. Interaction with RNH1 inhibits this protein. In terms of tissue distribution, pancreas.

The protein localises to the secreted. The catalysed reaction is an [RNA] containing cytidine + H2O = an [RNA]-3'-cytidine-3'-phosphate + a 5'-hydroxy-ribonucleotide-3'-[RNA].. It carries out the reaction an [RNA] containing uridine + H2O = an [RNA]-3'-uridine-3'-phosphate + a 5'-hydroxy-ribonucleotide-3'-[RNA].. Functionally, endonuclease that catalyzes the cleavage of RNA on the 3' side of pyrimidine nucleotides. Acts on single-stranded and double-stranded RNA. The chain is Ribonuclease pancreatic (RNASE1) from Mesocricetus auratus (Golden hamster).